Consider the following 142-residue polypeptide: Large ribosomal subunit protein uL11 (142 aa).

It belongs to the universal ribosomal protein uL11 family. In terms of assembly, part of the ribosomal stalk of the 50S ribosomal subunit. Interacts with L10 and the large rRNA to form the base of the stalk. L10 forms an elongated spine to which L12 dimers bind in a sequential fashion forming a multimeric L10(L12)X complex. One or more lysine residues are methylated.

Functionally, forms part of the ribosomal stalk which helps the ribosome interact with GTP-bound translation factors. This chain is Large ribosomal subunit protein uL11, found in Leptospira interrogans serogroup Icterohaemorrhagiae serovar copenhageni (strain Fiocruz L1-130).